The sequence spans 212 residues: Peptide methionine sulfoxide reductase MsrA (212 aa).

Residue Cys52 is part of the active site.

Belongs to the MsrA Met sulfoxide reductase family.

The catalysed reaction is L-methionyl-[protein] + [thioredoxin]-disulfide + H2O = L-methionyl-(S)-S-oxide-[protein] + [thioredoxin]-dithiol. It carries out the reaction [thioredoxin]-disulfide + L-methionine + H2O = L-methionine (S)-S-oxide + [thioredoxin]-dithiol. Its function is as follows. Has an important function as a repair enzyme for proteins that have been inactivated by oxidation. Catalyzes the reversible oxidation-reduction of methionine sulfoxide in proteins to methionine. The polypeptide is Peptide methionine sulfoxide reductase MsrA (Escherichia coli (strain SMS-3-5 / SECEC)).